Reading from the N-terminus, the 492-residue chain is Catalase isozyme 1 (492 aa).

Active-site residues include His-65 and Asn-138. Tyr-348 lines the heme pocket.

Belongs to the catalase family. Homotetramer. Heme serves as cofactor.

The protein resides in the cytoplasm. It is found in the cytosol. Its subcellular location is the peroxisome matrix. The catalysed reaction is 2 H2O2 = O2 + 2 H2O. Its activity is regulated as follows. Inhibited by salicylic acid. Its function is as follows. Catalyzes the degradation of hydrogen peroxide (H(2)O(2)) generated by peroxisomal oxidases to water and oxygen, thereby protecting cells from the toxic effects of hydrogen peroxide. The sequence is that of Catalase isozyme 1 (CAT-1) from Nicotiana tabacum (Common tobacco).